A 154-amino-acid chain; its full sequence is OCIA domain-containing protein 2 (154 aa).

The OCIA domain maps to 1 to 120; it reads MASVSTHGNQ…HSFEDQLRGA (120 aa). N6-acetyllysine is present on Lys41.

In terms of assembly, interacts (via OCIA domain) with OCIAD1/ASRIJ and STAT3. As to expression, abundant in kidney, liver and brain.

The protein resides in the endosome. The protein localises to the mitochondrion. It localises to the mitochondrion inner membrane. Functionally, has an essential role in the assembly of mitochondrial respiratory chain complex III. Is also required for STAT3 activation and plays a role in cell migration. The chain is OCIA domain-containing protein 2 (Ociad2) from Mus musculus (Mouse).